Here is a 434-residue protein sequence, read N- to C-terminus: Fez family zinc finger protein 2 (434 aa).

The Engrailed homology 1 repressor signature appears at 27–42; that stretch reads SLAFSIERIMAKTSEP. C2H2-type zinc fingers lie at residues 253–275, 281–303, 309–331, 337–359, 365–387, and 393–416; these read FTCE…MPVH, FVCK…KIIH, HKCN…IRIH, FVCE…KLTH, YKCS…MHTH, and FTCA…RKLH.

This sequence belongs to the krueppel C2H2-type zinc-finger protein family.

It is found in the nucleus. Transcription repressor. Component of the regulatory cascade that controls the development of dopaminergic (DA) and serotonergic (5HT) neurons. This chain is Fez family zinc finger protein 2 (fezf2), found in Xenopus laevis (African clawed frog).